Here is a 301-residue protein sequence, read N- to C-terminus: Small ribosomal subunit protein uS2 (301 aa).

This sequence belongs to the universal ribosomal protein uS2 family. Component of the small ribosomal subunit. Mature ribosomes consist of a small (40S) and a large (60S) subunit. The 40S subunit contains about 33 different proteins and 1 molecule of RNA (18S). The 60S subunit contains about 49 different proteins and 3 molecules of RNA (28S, 5.8S and 5S). Interacts with ribosomal protein S21.

It is found in the cytoplasm. Functionally, required for the assembly and/or stability of the 40S ribosomal subunit. Required for the processing of the 20S rRNA-precursor to mature 18S rRNA in a late step of the maturation of 40S ribosomal subunits. This chain is Small ribosomal subunit protein uS2, found in Brugia malayi (Filarial nematode worm).